A 109-amino-acid chain; its full sequence is Cell division suppressor protein YneA (109 aa).

The 52-residue stretch at 39-90 folds into the LysM domain; it reads SEVNVSEGDSLWALADQYAGKSDMAKADFVSWVEKENNLADGHVEAGESVVI.

Belongs to the YneA family.

The protein resides in the cytoplasm. Its function is as follows. Inhibits cell division during the SOS response. Affects a later stage of the cell division protein assembly, after the assembly of the Z ring, by probably suppressing recruitment of FtsL and/or DivIC to the division machinery. This Listeria monocytogenes serotype 4b (strain F2365) protein is Cell division suppressor protein YneA.